The primary structure comprises 127 residues: Fluoride-specific ion channel FluC (127 aa).

The next 4 membrane-spanning stretches (helical) occupy residues 4–24 (LSVLGFIALGGAFGACSRYLI), 38–58 (YGTLTVNVVGSFIMGLLIAAF), 71–91 (IIGLGFLGALTTFSTFSMDNV), and 104–124 (LNVLLNVVLSISAAWIGFQLL). Positions 78 and 81 each coordinate Na(+).

It belongs to the fluoride channel Fluc/FEX (TC 1.A.43) family.

The protein localises to the cell inner membrane. It carries out the reaction fluoride(in) = fluoride(out). Na(+) is not transported, but it plays an essential structural role and its presence is essential for fluoride channel function. Functionally, fluoride-specific ion channel. Important for reducing fluoride concentration in the cell, thus reducing its toxicity. This chain is Fluoride-specific ion channel FluC, found in Vibrio campbellii (strain ATCC BAA-1116).